The chain runs to 144 residues: Gas vesicle protein I1 (144 aa).

Positions 1-144 are disordered; it reads MSDKQQQKHK…SPTEDEVNDE (144 aa). Composition is skewed to basic residues over residues 7-17 and 26-46; these read QKHKQKARQAR and KARRNLLRQREKLARRRTRNR. The span at 75–94 shows a compositional bias: polar residues; it reads MPPQKSNAENAVRNSHSTVP. Residues 122–136 are compositionally biased toward low complexity; the sequence is SEASAPSDESASGSP.

It belongs to the gas vesicle GvpI family. As to quaternary structure, gvpF to GvpM interact with each other in vitro, and may form multi-subunit complex(es). Interacts with GvpC1 and GvpO.

It localises to the gas vesicle. Functionally, proteins GvpF to GvpM might be involved in nucleating gas vesicle formation. A minor component of the gas vesicle. Gas vesicles are hollow, gas filled proteinaceous nanostructures found in several microbial planktonic microorganisms. They allow positioning of halobacteria at the optimal depth for growth in the poorly aerated, shallow brine pools of their habitat. In terms of biological role, expression of a 9.5 kb p-vac DNA fragment containing 2 divergently transcribed regions (gvpD-gvpE-gvpF-gvpG-gvpH-gvpI-gvpJ-gvpK-gvpL-gvpM and gvpA-gvpC-gvpN-gvpO) allows H.volcanii to produce gas vesicles. A similar region restores gas vesicle production in H.halobium without the p-vac locus, but it still has the c-vac locus. The polypeptide is Gas vesicle protein I1 (gvpI11) (Halobacterium salinarum (strain ATCC 700922 / JCM 11081 / NRC-1) (Halobacterium halobium)).